A 188-amino-acid chain; its full sequence is Probable manganese efflux pump MntP (188 aa).

5 helical membrane-spanning segments follow: residues 3–23 (ITAT…ASVG), 66–86 (LEWN…RMII), 106–128 (WLLV…GLAF), 143–163 (ATLI…SIIG), and 168–188 (ILGG…HFHG).

The protein belongs to the MntP (TC 9.B.29) family.

The protein resides in the cell inner membrane. Its function is as follows. Probably functions as a manganese efflux pump. The chain is Probable manganese efflux pump MntP from Shigella sonnei (strain Ss046).